Reading from the N-terminus, the 301-residue chain is MHIAIMSRNKNLYSTSRLKEAAEARGHVIKIVDPLKCYMNINMNAPSIHVRGEELPKFDAVIPRIGASVTFYGTAVLRQFEMMGTHPLNESVAITRSRDKLRSLQLLSRKNIGLPVTGFASKPADIPDLLDMVGGAPCVIKLLEGTQGIGVVLAETRKAAESVIEAFMGLKANIMVQEYIAEAGGADIRCFVIGDKVIAAMKRQALPGEFRSNLHRGGSASIVKLTPEERSTALRAAKTMGLNVAGVDILRSKHGPLVMEVNSSPGLEGIEKATGIDVAEKIIQFIEKNVKSTSSKTKGVG.

The 184-residue stretch at leucine 104 to glutamate 287 folds into the ATP-grasp domain. ATP is bound by residues lysine 141, glutamate 178 to tyrosine 179, aspartate 187, and arginine 211 to asparagine 213. 3 residues coordinate Mg(2+): aspartate 248, glutamate 260, and asparagine 262. 3 residues coordinate Mn(2+): aspartate 248, glutamate 260, and asparagine 262.

The protein belongs to the RimK family. It depends on Mg(2+) as a cofactor. Mn(2+) is required as a cofactor.

This Shewanella frigidimarina (strain NCIMB 400) protein is Probable alpha-L-glutamate ligase 1.